A 155-amino-acid chain; its full sequence is Ribonuclease H (155 aa).

Residues 5–146 (DQKPVIIHTD…ADQLARDGLT (142 aa)) enclose the RNase H type-1 domain. Residues aspartate 14, glutamate 52, aspartate 74, and aspartate 138 each contribute to the Mg(2+) site. The interval 133-155 (ENERADQLARDGLTENRMKSRVK) is disordered.

This sequence belongs to the RNase H family. As to quaternary structure, monomer. Requires Mg(2+) as cofactor.

It is found in the cytoplasm. It catalyses the reaction Endonucleolytic cleavage to 5'-phosphomonoester.. Its function is as follows. Endonuclease that specifically degrades the RNA of RNA-DNA hybrids. This chain is Ribonuclease H, found in Rhodopseudomonas palustris (strain ATCC BAA-98 / CGA009).